The primary structure comprises 704 residues: Elongation factor G (704 aa).

The tr-type G domain occupies 8 to 290; the sequence is ARYRNIGISA…AVIDYLPSPV (283 aa). GTP is bound by residues 17-24, 88-92, and 142-145; these read AHIDAGKT, DTPGH, and NKMD. An N6-acetyllysine mark is found at K504 and K643.

Belongs to the TRAFAC class translation factor GTPase superfamily. Classic translation factor GTPase family. EF-G/EF-2 subfamily.

The protein resides in the cytoplasm. Catalyzes the GTP-dependent ribosomal translocation step during translation elongation. During this step, the ribosome changes from the pre-translocational (PRE) to the post-translocational (POST) state as the newly formed A-site-bound peptidyl-tRNA and P-site-bound deacylated tRNA move to the P and E sites, respectively. Catalyzes the coordinated movement of the two tRNA molecules, the mRNA and conformational changes in the ribosome. The polypeptide is Elongation factor G (Shigella sonnei (strain Ss046)).